A 313-amino-acid chain; its full sequence is Biotin synthase (313 aa).

Positions 28-258 (NFGNDIELCS…LFPQARLRLS (231 aa)) constitute a Radical SAM core domain. Cys46, Cys50, and Cys53 together coordinate [4Fe-4S] cluster. Positions 90, 121, 181, and 256 each coordinate [2Fe-2S] cluster.

Belongs to the radical SAM superfamily. Biotin synthase family. In terms of assembly, homodimer. Requires [4Fe-4S] cluster as cofactor. [2Fe-2S] cluster serves as cofactor.

It catalyses the reaction (4R,5S)-dethiobiotin + (sulfur carrier)-SH + 2 reduced [2Fe-2S]-[ferredoxin] + 2 S-adenosyl-L-methionine = (sulfur carrier)-H + biotin + 2 5'-deoxyadenosine + 2 L-methionine + 2 oxidized [2Fe-2S]-[ferredoxin]. Its pathway is cofactor biosynthesis; biotin biosynthesis; biotin from 7,8-diaminononanoate: step 2/2. Functionally, catalyzes the conversion of dethiobiotin (DTB) to biotin by the insertion of a sulfur atom into dethiobiotin via a radical-based mechanism. This chain is Biotin synthase, found in Francisella tularensis subsp. mediasiatica (strain FSC147).